The following is a 581-amino-acid chain: MHPRYSPAPPLQQQQQQHQQMTGIGGPGGLLRGPANNSQQLPPQMPRSQNYANGSSSSAAAASAVTAAPPTPRSAFPVAPLTASAVALKGAIPQRPPAMTSPAAAAAGAALAAGAPYRGATSWTPQGYAPAAAAAAAAVAQQAAAYRYTAPLPQPAYAAYTPHTATTPATTTYGQRVPTAASPSNTNSSSSSNTGSQSGTLSTSLSHTTNTNTNMGPNGTAQNQNQQGGGGEQLSKTNLYIRGLQQGTTDKDLVNMCAQYGTIISTKAILDKTTNKCKGYGFVDFEQPAYAENAVKGLQAKGVQAQMAKQQEQDPTNLYIANLPPHFKETDLEAMLSKYGQVVSTRILRDQQMNSKGVGFARMESREKCEQIIQMFNGNTIPGAKDPLLVKFADGGPKKKNLFKTPDPNTRAWRDVSAEGIPVAYDPTLQQNGVSVNVGTPIGVPYSRFSAPPVGGYPVAGSQWIPGYMMTQPITQVDDQYMQMAAPQLGVTSYKPEAVNQVQPRGISMMVSGDTGVPYGTMMPQLATLQIGNSYISPTYPYYAPPPTIIPTMPMTDSEQASTAASPDEAYTQYPHQAAPK.

The span at 1–10 (MHPRYSPAPP) shows a compositional bias: pro residues. The segment at 1–73 (MHPRYSPAPP…AVTAAPPTPR (73 aa)) is disordered. The residue at position 5 (tyrosine 5) is a Phosphotyrosine. Residues 35 to 54 (ANNSQQLPPQMPRSQNYANG) are compositionally biased toward polar residues. Residues 55–68 (SSSSAAAASAVTAA) are compositionally biased toward low complexity. Residues tyrosine 128 and tyrosine 146 each carry the phosphotyrosine modification. Low complexity predominate over residues 168–226 (PATTTYGQRVPTAASPSNTNSSSSSNTGSQSGTLSTSLSHTTNTNTNMGPNGTAQNQNQ). The segment at 168–234 (PATTTYGQRV…NQQGGGGEQL (67 aa)) is disordered. 2 RRM domains span residues 237 to 310 (TNLY…MAKQ) and 316 to 395 (TNLY…FADG). Residues 555 to 581 (MTDSEQASTAASPDEAYTQYPHQAAPK) form a disordered region.

In terms of biological role, has a role in the perception of gravity. The polypeptide is Protein alan shepard (Drosophila willistoni (Fruit fly)).